A 663-amino-acid polypeptide reads, in one-letter code: Protein-arginine deiminase type-4 (663 aa).

Asn-153, Asp-155, Asp-157, Asp-165, Asp-168, Glu-170, Asp-176, and Asp-179 together coordinate Ca(2+). Arg-205, Arg-212, and Arg-218 each carry citrulline. Gln-349 provides a ligand contact to Ca(2+). Asp-350 is an active-site residue. Ca(2+)-binding residues include Glu-351, Glu-353, Asp-369, and Ser-370. Arg-372 carries the citrulline modification. Position 373 (Asn-373) interacts with Ca(2+). 2 positions are modified to citrulline: Arg-374 and Arg-383. Arg-374 contacts substrate. Residues Asp-388, Phe-407, Leu-410, and Glu-411 each contribute to the Ca(2+) site. Catalysis depends on residues His-471 and Asp-473. Arg-639 lines the substrate pocket. Residue Cys-645 is part of the active site.

It belongs to the protein arginine deiminase family. The cofactor is Ca(2+). Post-translationally, autocitrullination at Arg-372 and Arg-374 inactivates the enzyme. In terms of tissue distribution, expressed in eosinophils and neutrophils, not expressed in peripheral monocytes or lymphocytes.

It is found in the cytoplasm. It localises to the nucleus. Its subcellular location is the cytoplasmic granule. The catalysed reaction is L-arginyl-[protein] + H2O = L-citrullyl-[protein] + NH4(+). Its activity is regulated as follows. Strongly Inhibited by F-amidine and N-alpha-benzoyl-N5-(2-chloro-1-iminoethyl)-L-ornithine amide (Cl-amidine). These inhibitors are however not specific to PADI4 and also inhibit other members of the family. Incorporation of a carboxylate ortho to the backbone amide of Cl-amidine results in inhibitors with increased specificity for PADI4: N-alpha-(2-carboxyl)benzoyl-N(5)-(2-fluoro-1-iminoethyl)-L-ornithine amide (o-F-amidine) and N-alpha-(2-carboxyl)benzoyl-N(5)-(2-chloro-1-iminoethyl)-L-ornithine amide (o-Cl-amidine). Strongly and specifically inhibited by Thr-Asp-F-amidine (TDFA); other members of the family are not inhibited. Functionally, catalyzes the citrullination/deimination of arginine residues of proteins such as histones, thereby playing a key role in histone code and regulation of stem cell maintenance. Citrullinates histone H1 at 'Arg-54' (to form H1R54ci), histone H3 at 'Arg-2', 'Arg-8', 'Arg-17' and/or 'Arg-26' (to form H3R2ci, H3R8ci, H3R17ci, H3R26ci, respectively) and histone H4 at 'Arg-3' (to form H4R3ci). Acts as a key regulator of stem cell maintenance by mediating citrullination of histone H1: citrullination of 'Arg-54' of histone H1 (H1R54ci) results in H1 displacement from chromatin and global chromatin decondensation, thereby promoting pluripotency and stem cell maintenance. Promotes profound chromatin decondensation during the innate immune response to infection in neutrophils by mediating formation of H1R54ci. Required for the formation of neutrophil extracellular traps (NETs); NETs are mainly composed of DNA fibers and are released by neutrophils to bind pathogens during inflammation. Citrullination of histone H3 prevents their methylation by CARM1 and HRMT1L2/PRMT1 and represses transcription. Citrullinates EP300/P300 at 'Arg-2142', which favors its interaction with NCOA2/GRIP1. The chain is Protein-arginine deiminase type-4 (PADI4) from Homo sapiens (Human).